The primary structure comprises 150 residues: 2-aminobenzenesulfonate 2,3-dioxygenase subunit beta (150 aa).

Belongs to the bacterial ring-hydroxylating dioxygenase beta subunit family. As to quaternary structure, heterotetramer with a alpha2beta2 structure.

The enzyme catalyses 2-aminobenzenesulfonate + NADH + O2 + 2 H(+) = 2,3-dihydroxybenzenesulfonate + NH4(+) + NAD(+). With respect to regulation, inhibited by o-phenanthroline. Its function is as follows. Beta subunit of the oxygenase component of the 2-aminobenzenesulfonate 2,3-dioxygenase system (deaminating) (ABSDOS). Can use 2-aminobenzenesulfonate (ABS), benzenesulfonate (BS), 4-toluenesulfonate (TS), 2-nitrobenzenesulfonate, 3- and 4-aminobenzenesulfonates, 4-chloro- and 4-hydroxybenzenesulfonates and pyridine-3-sulfonate as substrates. No desulfonation of ABS to aminocatechol or aminophenol detected. This chain is 2-aminobenzenesulfonate 2,3-dioxygenase subunit beta, found in Alcaligenes sp.